Reading from the N-terminus, the 379-residue chain is Chaperone protein DnaJ (379 aa).

Residues 5-69 (EFYDRLGVSK…QKRAAYDQYG (65 aa)) enclose the J domain. Residues 135–217 (GAEKEVSYNR…CHGTGHEKKT (83 aa)) form a CR-type zinc finger. Cys-148, Cys-151, Cys-165, Cys-168, Cys-191, Cys-194, Cys-205, and Cys-208 together coordinate Zn(2+). CXXCXGXG motif repeat units lie at residues 148 to 155 (CHTCSGSG), 165 to 172 (CQKCHGSG), 191 to 198 (CDVCQGSG), and 205 to 212 (CPTCHGTG).

The protein belongs to the DnaJ family. In terms of assembly, homodimer. Requires Zn(2+) as cofactor.

The protein localises to the cytoplasm. Its function is as follows. Participates actively in the response to hyperosmotic and heat shock by preventing the aggregation of stress-denatured proteins and by disaggregating proteins, also in an autonomous, DnaK-independent fashion. Unfolded proteins bind initially to DnaJ; upon interaction with the DnaJ-bound protein, DnaK hydrolyzes its bound ATP, resulting in the formation of a stable complex. GrpE releases ADP from DnaK; ATP binding to DnaK triggers the release of the substrate protein, thus completing the reaction cycle. Several rounds of ATP-dependent interactions between DnaJ, DnaK and GrpE are required for fully efficient folding. Also involved, together with DnaK and GrpE, in the DNA replication of plasmids through activation of initiation proteins. The chain is Chaperone protein DnaJ from Streptococcus agalactiae serotype III (strain NEM316).